The sequence spans 47 residues: Large ribosomal subunit protein bL34 (47 aa).

This sequence belongs to the bacterial ribosomal protein bL34 family.

This chain is Large ribosomal subunit protein bL34, found in Mycobacterium avium (strain 104).